The following is a 525-amino-acid chain: D-arabinono-1,4-lactone oxidase (525 aa).

An FAD-binding PCMH-type domain is found at 23–197 (YSCRPQLYFQ…VKATIRVIPE (175 aa)). Histidine 60 is subject to Pros-8alpha-FAD histidine.

This sequence belongs to the oxygen-dependent FAD-linked oxidoreductase family. FAD is required as a cofactor.

It localises to the mitochondrion membrane. The enzyme catalyses D-arabinono-1,4-lactone + O2 = dehydro-D-arabinono-1,4-lactone + H2O2 + H(+). It functions in the pathway cofactor biosynthesis; D-erythroascorbate biosynthesis; dehydro-D-arabinono-1,4-lactone from D-arabinose: step 2/2. The polypeptide is D-arabinono-1,4-lactone oxidase (ALO1) (Kluyveromyces lactis (strain ATCC 8585 / CBS 2359 / DSM 70799 / NBRC 1267 / NRRL Y-1140 / WM37) (Yeast)).